The primary structure comprises 66 residues: DNA gyrase inhibitor YacG (66 aa).

Residues C9, C12, C28, and C32 each coordinate Zn(2+). Positions 45 to 66 (HKIAGSEESEDELYSGDLEPRH) are disordered.

This sequence belongs to the DNA gyrase inhibitor YacG family. Interacts with GyrB. Zn(2+) is required as a cofactor.

Its function is as follows. Inhibits all the catalytic activities of DNA gyrase by preventing its interaction with DNA. Acts by binding directly to the C-terminal domain of GyrB, which probably disrupts DNA binding by the gyrase. The protein is DNA gyrase inhibitor YacG of Pseudomonas putida (strain ATCC 47054 / DSM 6125 / CFBP 8728 / NCIMB 11950 / KT2440).